The sequence spans 44 residues: Unknown protein 9 (44 aa).

This Pseudotsuga menziesii (Douglas-fir) protein is Unknown protein 9.